A 620-amino-acid polypeptide reads, in one-letter code: Mitochondrial Rho GTPase 2 (620 aa).

The Cytoplasmic segment spans residues 1–594 (MRRDVRILLL…ELHPTSFWLR (594 aa)). The Miro 1 domain maps to 2-168 (RRDVRILLLG…FYYAQKAVLH (167 aa)). GTP is bound by residues Gly16, Lys17, Thr18, and Ser19. Thr18 contacts Mg(2+). Asp57 is a Mg(2+) binding site. Residue Ser59 coordinates GTP. Lys96 is covalently cross-linked (Glycyl lysine isopeptide (Lys-Gly) (interchain with G-Cter in ubiquitin)). Residues Asn118, Lys119, Asp121, Ala149, and Lys150 each contribute to the GTP site. Lys119 is covalently cross-linked (Glycyl lysine isopeptide (Lys-Gly) (interchain with G-Cter in ubiquitin)). A Glycyl lysine isopeptide (Lys-Gly) (interchain with G-Cter in ubiquitin) cross-link involves residue Lys164. EF-hand domains lie at 184–219 (ACAQ…CFGH) and 304–339 (RGYQ…FSGA). Asp197, Asp199, Asp201, Glu208, Asp317, Asp319, Asp321, and Glu328 together coordinate Ca(2+). The 164-residue stretch at 415 to 578 (RSVLMCKVLG…FTQLATMATF (164 aa)) folds into the Miro 2 domain. Gly427, Gly429, Lys430, Ser431, and Ala432 together coordinate GTP. Ser431 is a binding site for Mg(2+). Glu473 serves as a coordination point for Mg(2+). Positions 527, 529, and 558 each coordinate GTP. Residues 595–617 (GVLVAVGTAVAAVLSFSLYRVLV) form a helical; Anchor for type IV membrane protein membrane-spanning segment. The Mitochondrial intermembrane portion of the chain corresponds to 618–620 (KSR).

Belongs to the mitochondrial Rho GTPase family. In terms of assembly, homodimer. Interacts with the kinesin-binding proteins TRAK1/OIP106 and TRAK2/GRIF1, forming a link between mitochondria and the trafficking apparatus of the microtubules. Interacts with ARMCX3. Found in a complex with KIF5B, OGT, RHOT1 and TRAK1. Post-translationally, ubiquitinated by PRKN in a PINK1-dependent manner, leading to its degradation. Ubiquitously expressed.

The protein localises to the mitochondrion outer membrane. It catalyses the reaction GTP + H2O = GDP + phosphate + H(+). The enzyme catalyses ATP + H2O = ADP + phosphate + H(+). The catalysed reaction is UTP + H2O = UDP + phosphate + H(+). Atypical mitochondrial nucleoside-triphosphatase (NTPase) involved in mitochondrial trafficking. Probably involved in control of anterograde transport of mitochondria and their subcellular distribution. Can hydrolyze GTP, ATP and UTP. The sequence is that of Mitochondrial Rho GTPase 2 (Rhot2) from Mus musculus (Mouse).